We begin with the raw amino-acid sequence, 130 residues long: Large ribosomal subunit protein eL32 (130 aa).

The protein belongs to the eukaryotic ribosomal protein eL32 family.

The sequence is that of Large ribosomal subunit protein eL32 (rpl32e) from Pyrococcus horikoshii (strain ATCC 700860 / DSM 12428 / JCM 9974 / NBRC 100139 / OT-3).